The chain runs to 617 residues: MWTAWCVAALSVAAVCGIRQDTTTVLRVTKDVLGDAISGTIQKSDAFRSALREVPVGVGGVPYNDFHVREPPPKYTNGRQLGGNYKYGHIEANDNTAQLGGKYRYGEILDSDGSLRDLRHEDYRPSDSAYHRGPGRYRSAADPSSAGRLHRRELRPGEIPAGVATGALGPGGLLGTGGILANEGILAGQGGLLGGGGLLGDGGLLGGGGVLGVLGEGGILSTVQGITGLRIVELTLPRVSVRLLPGVGVYLSLYTRVAINGKSLIGFLDIAVEVNITAKVRLTMDRTGYPRLVIERCDTLLGGIKVKLLRGLLPNLVDNLVNRVLANVLPDLLCPIVDVVLGLVNDQLGLVDSLVPLGILGSVQYTFSSLPLVTGEFLELDLNTLVGEAGGDLIDYPLGRPAMLPRPQMPELPPMGDNTNSQLAISANFLSSVLTMLQKQGALDIDITDGMFEDLPPLTTSTLGALIPKVFQQYPESRPLTIRIQVPNPPTVTLQKDKALVKVFATSEVVVSQPNDVETTICLIDVDTDLLASFSVEGDKLMIDAKLDKTSLNLRTSNVGNFDVFILEMLVEKIFDLAFMPAMNAILGSGVPLPKILNIDFSNADIDVLEDLLVLST.

An N-terminal signal peptide occupies residues 1–17 (MWTAWCVAALSVAAVCG). The tract at residues 124 to 149 (RPSDSAYHRGPGRYRSAADPSSAGRL) is disordered. N-linked (GlcNAc...) asparagine glycosylation is present at Asn-275. Cys-297 and Cys-334 form a disulfide bridge.

It belongs to the BPI/LBP/Plunc superfamily. BPI/LBP family. Highly expressed in olfactory mucosa but undetectable in thymus, kidney, lung, brain, spleen and liver.

It localises to the secreted. The protein localises to the cytoplasm. Functionally, may have the capacity to recognize and bind specific classes of odorants. May act as a carrier molecule, transporting odorants across the mucus layer to access receptor sites. May serve as a primary defense mechanism by recognizing and removing potentially harmful odorants or pathogenic microorganisms from the mucosa or clearing excess odorant from mucus to enable new odorant stimuli to be received. This Rattus norvegicus (Rat) protein is BPI fold-containing family B member 4 (Bpifb4).